The sequence spans 80 residues: Ubiquitin-like protein NEDD8-like protein 2 (80 aa).

This sequence belongs to the ubiquitin family.

The chain is Ubiquitin-like protein NEDD8-like protein 2 (nedd8l2) from Dictyostelium discoideum (Social amoeba).